Consider the following 110-residue polypeptide: Small ubiquitin-related modifier 3 (110 aa).

Glycyl lysine isopeptide (Lys-Gly) (interchain with G-Cter in SUMO2) cross-links involve residues Lys5 and Lys7. Residue Lys11 forms a Glycyl lysine isopeptide (Lys-Gly) (interchain with G-Cter in SUMO); alternate linkage. A Glycyl lysine isopeptide (Lys-Gly) (interchain with G-Cter in SUMO2); alternate cross-link involves residue Lys11. One can recognise a Ubiquitin-like domain in the interval 15–92 (DHINLKVAGQ…IDVFQQQTGG (78 aa)). Residues 89-101 (QTGGTASRASVPT) show a composition bias toward polar residues. The disordered stretch occupies residues 89-110 (QTGGTASRASVPTPSHFPDICY). Gly92 participates in a covalent cross-link: Glycyl lysine isopeptide (Gly-Lys) (interchain with K-? in acceptor proteins). The propeptide occupies 93-110 (TASRASVPTPSHFPDICY).

Belongs to the ubiquitin family. SUMO subfamily. Interacts with SAE2 and UBE2I. Covalently attached to a number of proteins. Interacts with USP25 (via ts SIM domain); the interaction sumoylates USP25 and inhibits its ubiquitin hydrolyzing activity. Interacts with BMAL1. Post-translationally, polymeric chains can be formed through Lys-11 cross-linking. Cleavage of precursor form by SENP1, SENP2 or SENP5 is necessary for function.

It localises to the cytoplasm. The protein localises to the nucleus. The protein resides in the PML body. Functionally, ubiquitin-like protein which can be covalently attached to target lysines either as a monomer or as a lysine-linked polymer. Does not seem to be involved in protein degradation and may function as an antagonist of ubiquitin in the degradation process. Plays a role in a number of cellular processes such as nuclear transport, DNA replication and repair, mitosis and signal transduction. Covalent attachment to its substrates requires prior activation by the E1 complex SAE1-SAE2 and linkage to the E2 enzyme UBE2I, and can be promoted by an E3 ligase such as PIAS1-4, RANBP2 or CBX4. Plays a role in the regulation of sumoylation status of SETX. This Rattus norvegicus (Rat) protein is Small ubiquitin-related modifier 3 (Sumo3).